The following is a 212-amino-acid chain: Pyridoxine/pyridoxamine 5'-phosphate oxidase (212 aa).

Residues Arg8 to Tyr11 and Lys66 each bind substrate. FMN is bound by residues Arg61–Lys66, Phe76–Thr77, Arg82, Lys83, and Gln105. Substrate contacts are provided by Tyr123, Arg127, and Ser131. FMN contacts are provided by residues Gln140 to Ser141 and Trp185. Arg191–His193 provides a ligand contact to substrate. Arg195 provides a ligand contact to FMN.

It belongs to the pyridoxamine 5'-phosphate oxidase family. In terms of assembly, homodimer. Requires FMN as cofactor.

It catalyses the reaction pyridoxamine 5'-phosphate + O2 + H2O = pyridoxal 5'-phosphate + H2O2 + NH4(+). The catalysed reaction is pyridoxine 5'-phosphate + O2 = pyridoxal 5'-phosphate + H2O2. It functions in the pathway cofactor metabolism; pyridoxal 5'-phosphate salvage; pyridoxal 5'-phosphate from pyridoxamine 5'-phosphate: step 1/1. It participates in cofactor metabolism; pyridoxal 5'-phosphate salvage; pyridoxal 5'-phosphate from pyridoxine 5'-phosphate: step 1/1. Catalyzes the oxidation of either pyridoxine 5'-phosphate (PNP) or pyridoxamine 5'-phosphate (PMP) into pyridoxal 5'-phosphate (PLP). In Shewanella frigidimarina (strain NCIMB 400), this protein is Pyridoxine/pyridoxamine 5'-phosphate oxidase.